The sequence spans 435 residues: Cyclin-J-like protein (435 aa).

Residues 14-191 form the Cyclin N-terminal domain; sequence DVHCTLREKE…LLEAFSWNLC (178 aa). The disordered stretch occupies residues 120-142; it reads SSNSPASAPHPPPTPPQVAETTG.

The protein belongs to the cyclin family. Cyclin J subfamily.

The protein is Cyclin-J-like protein (CCNJL) of Homo sapiens (Human).